The primary structure comprises 395 residues: MATVDRWLLPDGIEEVLPPEAARIETARRRVLDLFQRWGYELVITPHVEFLESLLSGSGQDLDLKTFKVIDPLSGRQMGLRADITPQVARVDAHTLRREGPSRLCYAGSVLHAKPRALATSRSPIQLGAELYGDSSTSSDIEVISLMLEMLELAMVPDVHMDLGHVGIYRGLARAAGLSGEAEQRLFDAMQRKAMDEIAELTATVEPSLAAMLQALARLCGGRETLDAARRVLAEAPAPVTEALEALIRIADQLALRYPDLPLYFDLGELRGYHYHTGVVFAVFVPGVGQSIAQGGRYDDIGADFGRARPATGFSTDLKTLVSLGKAELDSRLSGIWAPYGDDTALWQQISRLRREGERVVQALDGQNGETAATAGCDRQLILQDETWTVAPLAS.

Belongs to the class-II aminoacyl-tRNA synthetase family. HisZ subfamily. As to quaternary structure, heteromultimer composed of HisG and HisZ subunits.

The protein resides in the cytoplasm. It functions in the pathway amino-acid biosynthesis; L-histidine biosynthesis; L-histidine from 5-phospho-alpha-D-ribose 1-diphosphate: step 1/9. Its function is as follows. Required for the first step of histidine biosynthesis. May allow the feedback regulation of ATP phosphoribosyltransferase activity by histidine. The protein is ATP phosphoribosyltransferase regulatory subunit of Stutzerimonas stutzeri (Pseudomonas stutzeri).